Here is a 200-residue protein sequence, read N- to C-terminus: TATA-box-binding protein 2 (200 aa).

2 tandem repeats follow at residues 25–101 (LQNI…ARIV) and 115–192 (IQNI…YPVL).

Belongs to the TBP family. As to quaternary structure, belongs to the TFIID complex together with the TBP-associated factors (TAFs). Binds DNA as monomer. Interacts with TAF1 (via N-terminus). Interacts with TFIIB1. Interacts with PTF2. Interacts with HAT5/ATHB-1 and ATHB-7. Component of a nuclear protein complex containing at least TATA binding proteins (TBPs, e.g. TBP1 and TBP2) and ATX1.

The protein localises to the nucleus. Its function is as follows. General transcription factor (GTF) that functions at the core of the DNA-binding multiprotein factor TFIID. Binding of TFIID to the TATA box is the initial transcriptional step of the pre-initiation complex (PIC), playing a role in the activation of eukaryotic genes transcribed by RNA polymerase II. Interacts with TFIIB1 and is required for activated transcription and possibly basal transcription. May act as GTF of RNA polymerase I-dependent transcription and rRNA synthesis. Forms a ternary complex with PBRP1 and the rDNA promoter region. This Arabidopsis thaliana (Mouse-ear cress) protein is TATA-box-binding protein 2.